A 250-amino-acid polypeptide reads, in one-letter code: Ribosomal RNA small subunit methyltransferase J (250 aa).

Residues arginine 96 to aspartate 97 and aspartate 168 contribute to the S-adenosyl-L-methionine site.

Belongs to the methyltransferase superfamily. RsmJ family.

The protein localises to the cytoplasm. The enzyme catalyses guanosine(1516) in 16S rRNA + S-adenosyl-L-methionine = N(2)-methylguanosine(1516) in 16S rRNA + S-adenosyl-L-homocysteine + H(+). Its function is as follows. Specifically methylates the guanosine in position 1516 of 16S rRNA. The polypeptide is Ribosomal RNA small subunit methyltransferase J (Neisseria gonorrhoeae (strain ATCC 700825 / FA 1090)).